An 883-amino-acid chain; its full sequence is Translation initiation factor IF-2 (883 aa).

Residues 1-259 form a disordered region; it reads MVDTKTPGDK…GASKQRGRLT (259 aa). 2 stretches are compositionally biased toward low complexity: residues 10 to 22 and 77 to 89; these read KTLT…LTLK and PRQQ…PQQS. Basic and acidic residues predominate over residues 113-184; that stretch reads ARVREIEERK…GDAEPAKKPA (72 aa). Residues 185-218 are compositionally biased toward low complexity; it reads ETSTTTTTAAPARPATTTTRTPTPAGRPPAVAAE. The segment covering 235–244 has biased composition (pro residues); it reads PARPAPPPKQ. Positions 379–548 constitute a tr-type G domain; that stretch reads PRSPVVTVMG…MIALQAEILE (170 aa). Residues 388–395 form a G1 region; sequence GHVDHGKT. 388 to 395 is a binding site for GTP; that stretch reads GHVDHGKT. Residues 413–417 are G2; that stretch reads GITQH. The segment at 436–439 is G3; it reads DTPG. GTP-binding positions include 436 to 440 and 490 to 493; these read DTPGH and NKID. Residues 490–493 are G4; the sequence is NKID. The G5 stretch occupies residues 526 to 528; that stretch reads SAK.

Belongs to the TRAFAC class translation factor GTPase superfamily. Classic translation factor GTPase family. IF-2 subfamily.

It localises to the cytoplasm. One of the essential components for the initiation of protein synthesis. Protects formylmethionyl-tRNA from spontaneous hydrolysis and promotes its binding to the 30S ribosomal subunits. Also involved in the hydrolysis of GTP during the formation of the 70S ribosomal complex. This chain is Translation initiation factor IF-2, found in Rhodopseudomonas palustris (strain ATCC BAA-98 / CGA009).